A 111-amino-acid polypeptide reads, in one-letter code: Regulator of ribonuclease activity B (111 aa).

Belongs to the RraB family. In terms of assembly, interacts with the C-terminal region of Rne.

It is found in the cytoplasm. In terms of biological role, globally modulates RNA abundance by binding to RNase E (Rne) and regulating its endonucleolytic activity. Can modulate Rne action in a substrate-dependent manner by altering the composition of the degradosome. This Pseudoalteromonas translucida (strain TAC 125) protein is Regulator of ribonuclease activity B.